Reading from the N-terminus, the 263-residue chain is Putative methyltransferase DDB_G0268948 (263 aa).

Belongs to the methyltransferase superfamily.

The polypeptide is Putative methyltransferase DDB_G0268948 (Dictyostelium discoideum (Social amoeba)).